We begin with the raw amino-acid sequence, 291 residues long: MRYLSKDILEEVITQRPSDSYKSNFGRVVLIGGNRQYGGAIIMSTEACINSGAGLTTVITDVKNHGPLHARCPEAMVVGFEETVLLTNVVEQADVILIGPGLGLDATAQQILKMVLAQHQKQQWLIIDGSAITLFSQGNFSLTYPEKVVFTPHQMEWQRLSHLPIEQQTLANNQRQQAKLGSTIVLKSHRTTIFHAGEPFQNTGGNPGMATGGTGDTLAGIIAGFLAQFKPTIETIAGAVYLHSLIGDDLAKTDYVVLPTKISQALPTYMKKYAQPHTAPDSELLEQKRSR.

In terms of domain architecture, YjeF C-terminal spans 5-273 (SKDILEEVIT…QALPTYMKKY (269 aa)). The (6S)-NADPHX site is built by Ala40, Gly103, and His153. Residue Gly215 participates in AMP binding. Residue Asp216 participates in (6S)-NADPHX binding.

It belongs to the NnrD/CARKD family. Homotetramer. Requires Mg(2+) as cofactor.

The enzyme catalyses (6S)-NADHX + ADP = AMP + phosphate + NADH + H(+). It catalyses the reaction (6S)-NADPHX + ADP = AMP + phosphate + NADPH + H(+). In terms of biological role, catalyzes the dehydration of the S-form of NAD(P)HX at the expense of ADP, which is converted to AMP. Together with NAD(P)HX epimerase, which catalyzes the epimerization of the S- and R-forms, the enzyme allows the repair of both epimers of NAD(P)HX, a damaged form of NAD(P)H that is a result of enzymatic or heat-dependent hydration. The sequence is that of ADP-dependent (S)-NAD(P)H-hydrate dehydratase from Enterococcus faecalis (strain ATCC 700802 / V583).